The chain runs to 104 residues: uncharacterized protein (104 aa).

Disordered regions lie at residues 1-20 and 83-104; these read MTET…TTRK and TASA…VAKK. The segment covering 83 to 93 has biased composition (low complexity); it reads TASASSSGKKV. Over residues 94–104 the composition is skewed to basic residues; it reads VASKKKVVAKK.

This is an uncharacterized protein from Dictyostelium discoideum (Social amoeba).